A 230-amino-acid chain; its full sequence is UPF0173 metal-dependent hydrolase Acid_3917 (230 aa).

It belongs to the UPF0173 family.

The chain is UPF0173 metal-dependent hydrolase Acid_3917 from Solibacter usitatus (strain Ellin6076).